The chain runs to 370 residues: Putative FBD-associated F-box protein At1g50980 (370 aa).

Residues 31–77 (IRTISEFPDKVLLKILSLLPSKDVVATGVLSKRWRSLWKDVKTFRTS) form the F-box domain. In terms of domain architecture, FBD spans 292-343 (LMGNQPDLIPKSLSSHLEILEWRQYNDTAQEREAAKYILANASGLRKATFYT).

The protein is Putative FBD-associated F-box protein At1g50980 of Arabidopsis thaliana (Mouse-ear cress).